The following is a 147-amino-acid chain: Hemoglobin subunit beta (147 aa).

The residue at position 2 (V2) is an N-acetylvaline. Positions 3 to 147 constitute a Globin domain; sequence HLTGDEKAAV…VANALAHKYH (145 aa). T13 carries the phosphothreonine modification. S45 is modified (phosphoserine). The residue at position 60 (K60) is an N6-acetyllysine. Residue H64 participates in heme b binding. Residue K83 is modified to N6-acetyllysine. Residue H93 participates in heme b binding. C94 is subject to S-nitrosocysteine. The residue at position 145 (K145) is an N6-acetyllysine.

Belongs to the globin family. Heterotetramer of two alpha chains and two beta chains. As to expression, red blood cells.

Functionally, involved in oxygen transport from the lung to the various peripheral tissues. In Saimiri sciureus (Common squirrel monkey), this protein is Hemoglobin subunit beta (HBB).